The chain runs to 646 residues: Heat shock 70 kDa protein (646 aa).

The segment covering 613–632 (GGAPGGMPGAAPGGFPGGAP) has biased composition (gly residues). Positions 613-646 (GGAPGGMPGAAPGGFPGGAPGSNDNEGPTVEEVD) are disordered.

It belongs to the heat shock protein 70 family.

The polypeptide is Heat shock 70 kDa protein (hsps-1) (Neurospora crassa (strain ATCC 24698 / 74-OR23-1A / CBS 708.71 / DSM 1257 / FGSC 987)).